The chain runs to 357 residues: MSIQIQGVSKQYGTFQALTDIHLDIPKGELVALLGPSGSGKTTLLRIIAGLEEADGGSISFDGEDLTDIHVKNRQVGFVFQHYALFKHMNVFENVAFGLKVRKKSLRPSAEAIEEKVTELLKLVKMDGFAKRYPAQLSGGQRQRIALARALAVEPKILLLDEPFGALDAKVRKELRRWLRKLHDEFQITSVFVTHDQEEALDVADRIVVMNEGCIEQMGTPEEVYENPASPFVYDFLGNVNLFHGRVHKGKLNVGSVELEAPEHKHVSNVDGIAYVRPHDLSISHTKQSIDAIPAKVSYSHAVGNIVYVELKRDGTDEYLEAEITKEQFKQLNIQAGDFVYVQPKEVKVFIPEDFVI.

The ABC transporter domain maps to 3-237; that stretch reads IQIQGVSKQY…PASPFVYDFL (235 aa). 35 to 42 contributes to the ATP binding site; the sequence is GPSGSGKT.

Belongs to the ABC transporter superfamily. Sulfate/tungstate importer (TC 3.A.1.6) family. The complex is composed of two ATP-binding proteins (CysA), two transmembrane proteins (CysT and CysW) and a solute-binding protein (CysP).

The protein resides in the cell membrane. The catalysed reaction is sulfate(out) + ATP + H2O = sulfate(in) + ADP + phosphate + H(+). It catalyses the reaction thiosulfate(out) + ATP + H2O = thiosulfate(in) + ADP + phosphate + H(+). Part of the ABC transporter complex CysAWTP involved in sulfate/thiosulfate import. Responsible for energy coupling to the transport system. The chain is Sulfate/thiosulfate import ATP-binding protein CysA from Bacillus cereus (strain ATCC 14579 / DSM 31 / CCUG 7414 / JCM 2152 / NBRC 15305 / NCIMB 9373 / NCTC 2599 / NRRL B-3711).